The primary structure comprises 545 residues: Glucans biosynthesis protein G (545 aa).

Residues 1-35 (MIRVSSAVQRHAQKLIVLFSLLFGASLLMSDNGFA) form the signal peptide.

This sequence belongs to the OpgD/OpgG family.

Its subcellular location is the periplasm. The protein operates within glycan metabolism; osmoregulated periplasmic glucan (OPG) biosynthesis. In terms of biological role, involved in the biosynthesis of osmoregulated periplasmic glucans (OPGs). The protein is Glucans biosynthesis protein G of Vibrio cholerae serotype O1 (strain ATCC 39541 / Classical Ogawa 395 / O395).